A 263-amino-acid polypeptide reads, in one-letter code: LIM and SH3 domain protein 1 (263 aa).

Residue Met-1 is modified to N-acetylmethionine. The LIM zinc-binding domain occupies 5-56; the sequence is CARCGKIVYPTEKVNCLDKYWHKACFHCETCKMTLNMKNYKGYEKKPYCNAH. Position 42 is an N6-acetyllysine (Lys-42). Nebulin repeat units lie at residues 61–95 and 97–131; these read SFTM…KNKG and GFSV…KSRM. Thr-68 bears the Phosphothreonine mark. Lys-75 carries the N6-methyllysine modification. Phosphoserine is present on Ser-99. Position 104 is a phosphothreonine (Thr-104). Lys-112 carries the N6-succinyllysine modification. Residues Ser-118 and Ser-134 each carry the phosphoserine modification. Positions 123–207 are disordered; the sequence is HEEFEKSRMG…QRSAPGGGGK (85 aa). Residues 148-162 show a composition bias toward polar residues; sequence DSSSYRRPTEQQQPQ. At Thr-156 the chain carries Phosphothreonine; by PKA. Positions 204 to 263 constitute an SH3 domain; that stretch reads GGGKRYRAVYDYSAADEDEVSFQDGDTIVNVQQIDDGWMYGTVERTGDTGMLPANYVEAI.

As to quaternary structure, interacts with F-actin. Interacts with KBTBD10. Interacts with ANKRD54.

The protein resides in the cytoplasm. Its subcellular location is the cell cortex. It is found in the cytoskeleton. In terms of biological role, plays an important role in the regulation of dynamic actin-based, cytoskeletal activities. Agonist-dependent changes in LASP1 phosphorylation may also serve to regulate actin-associated ion transport activities, not only in the parietal cell but also in certain other F-actin-rich secretory epithelial cell types. This chain is LIM and SH3 domain protein 1 (Lasp1), found in Mus musculus (Mouse).